Consider the following 496-residue polypeptide: Germacrene A hydroxylase (496 aa).

Residues 1–2 (ME) lie on the Cytoplasmic side of the membrane. Residues 3–23 (LTLTTSLGLAVFVFILFKLLT) traverse the membrane as a helical; Signal-anchor for type II membrane protein segment. The Lumenal portion of the chain corresponds to 24 to 496 (GSKSTKNSLP…TAYKTANNSA (473 aa)). Cys-432 serves as a coordination point for heme. N-linked (GlcNAc...) asparagine glycosylation is present at Asn-493.

It belongs to the cytochrome P450 family. It depends on heme as a cofactor.

The protein resides in the endoplasmic reticulum membrane. The enzyme catalyses (+)-(R)-germacrene A + 3 reduced [NADPH--hemoprotein reductase] + 3 O2 = germacra-1(10),4,11(13)-trien-12-oate + 3 oxidized [NADPH--hemoprotein reductase] + 4 H2O + 4 H(+). Its pathway is secondary metabolite biosynthesis; terpenoid biosynthesis. Its function is as follows. Involved in the biosynthesis of germacrene-derived sesquiterpene lactones. Catalyzes three consecutive oxidations of germacrene A to produce germacrene A acid. Could also catalyze the three-step oxidation of non-natural substrate amorphadiene to artemisinic acid. This Barnadesia spinosa (Spiny barnadesia) protein is Germacrene A hydroxylase.